Here is a 164-residue protein sequence, read N- to C-terminus: Peptidyl-prolyl cis-trans isomerase A (164 aa).

Met1 bears the N-acetylmethionine mark. Val2 bears the N-acetylvaline; in Peptidyl-prolyl cis-trans isomerase A, N-terminally processed mark. Residues Phe7 to Gln163 form the PPIase cyclophilin-type domain. N6-acetyllysine; alternate is present on Lys28. A Glycyl lysine isopeptide (Lys-Gly) (interchain with G-Cter in SUMO2); alternate cross-link involves residue Lys28. Lys28 is covalently cross-linked (Glycyl lysine isopeptide (Lys-Gly) (interchain with G-Cter in ubiquitin); alternate). 2 positions are modified to N6-acetyllysine: Lys44 and Lys76. Position 77 is a phosphoserine (Ser77). Lys82 is modified (N6-acetyllysine; alternate). Residue Lys82 forms a Glycyl lysine isopeptide (Lys-Gly) (interchain with G-Cter in SUMO2); alternate linkage. Thr93 bears the Phosphothreonine mark. N-linked (GlcNAc...) asparagine glycosylation is present at Asn108. N6-acetyllysine is present on residues Lys125, Lys131, and Lys133.

It belongs to the cyclophilin-type PPIase family. PPIase A subfamily. As to quaternary structure, interacts with protein phosphatase PPP3CA/calcineurin A. Interacts with isoform 2 of BSG/CD147. Interacts with FOXO1; the interaction promotes FOXO1 dephosphorylation, nuclear accumulation and transcriptional activity. Interacts with integrin ITGA2B:ITGB3; the interaction is ROS and peptidyl-prolyl cis-trans isomerase (PPIase) activity-dependent and is increased in the presence of thrombin. Interacts with MAP3K5. Interacts with TARDBP; the interaction is dependent on the RNA-binding activity of TARDBP and the PPIase activity of PPIA/CYPA and the acetylation of PPIA/CYPA at Lys-125 favors the interaction. Interacts with HNRNPA1, HNRNPA2B1, HNRNPC, RBMX, HNRNPK and HNRNPM. Post-translationally, acetylation at Lys-125 markedly inhibits catalysis of cis to trans isomerization. PPIA acetylation also antagonizes the immunosuppressive effects of cyclosporine by inhibiting the sequential steps of cyclosporine binding and calcineurin inhibition. Acetylation at Lys-125 favors the interaction with TARDBP.

It is found in the cytoplasm. The protein resides in the secreted. The protein localises to the nucleus. It carries out the reaction [protein]-peptidylproline (omega=180) = [protein]-peptidylproline (omega=0). Binds cyclosporin A (CsA). CsA mediates some of its effects via an inhibitory action on PPIase. Its function is as follows. Catalyzes the cis-trans isomerization of proline imidic peptide bonds in oligopeptides. Exerts a strong chemotactic effect on leukocytes partly through activation of one of its membrane receptors BSG/CD147, initiating a signaling cascade that culminates in MAPK/ERK activation. Activates endothelial cells (ECs) in a proinflammatory manner by stimulating activation of NF-kappa-B and ERK, JNK and p38 MAP-kinases and by inducing expression of adhesion molecules including SELE and VCAM1. Induces apoptosis in ECs by promoting the FOXO1-dependent expression of CCL2 and BCL2L11 which are involved in EC chemotaxis and apoptosis. In response to oxidative stress, initiates proapoptotic and antiapoptotic signaling in ECs via activation of NF-kappa-B and AKT1 and up-regulation of antiapoptotic protein BCL2. Negatively regulates MAP3K5/ASK1 kinase activity, autophosphorylation and oxidative stress-induced apoptosis mediated by MAP3K5/ASK1. Necessary for the assembly of TARDBP in heterogeneous nuclear ribonucleoprotein (hnRNP) complexes and regulates TARDBP binding to RNA UG repeats and TARDBP-dependent expression of HDAC6, ATG7 and VCP which are involved in clearance of protein aggregates. Plays an important role in platelet activation and aggregation. Regulates calcium mobilization and integrin ITGA2B:ITGB3 bidirectional signaling via increased ROS production as well as by facilitating the interaction between integrin and the cell cytoskeleton. Binds heparan sulfate glycosaminoglycans. The sequence is that of Peptidyl-prolyl cis-trans isomerase A (Ppia) from Rattus norvegicus (Rat).